The chain runs to 298 residues: GTP cyclohydrolase FolE2 (298 aa).

The protein belongs to the GTP cyclohydrolase IV family.

The enzyme catalyses GTP + H2O = 7,8-dihydroneopterin 3'-triphosphate + formate + H(+). It functions in the pathway cofactor biosynthesis; 7,8-dihydroneopterin triphosphate biosynthesis; 7,8-dihydroneopterin triphosphate from GTP: step 1/1. Its function is as follows. Converts GTP to 7,8-dihydroneopterin triphosphate. The protein is GTP cyclohydrolase FolE2 of Pseudomonas fluorescens (strain Pf0-1).